The sequence spans 349 residues: MSNKVRIALDAMGGDFGASVVVPGAAISLTRHPDSEFLLFGDSALIKKELEAHPALKAVSQVIHTDVAVSMHDKPSQALRRGRKVSSMWLALEAVKNGKADVAVSAGNTGALMAMARFCLRMLPGIDRPAIAAIWPTVRGDSIVLDLGASIGGDEHHLKALAVMGAATASVLFDLERPTVGLLNIGVEEIKGGEEIRAAADLIRAMAQPPFDFIGFVEADGIGKGAADVIVTEGFSGNIALKAAEGTARQIGEYLRAAMSSTLMSKIGYLFARGAFRALREKMDPNKSNGGVFLGLNGVVVKSHGGTNADGFAYAVDVGYDMVRNDLLTKINQSLHRNGAEAHGVAPAA.

The protein belongs to the PlsX family. As to quaternary structure, homodimer. Probably interacts with PlsY.

The protein resides in the cytoplasm. The catalysed reaction is a fatty acyl-[ACP] + phosphate = an acyl phosphate + holo-[ACP]. It participates in lipid metabolism; phospholipid metabolism. Functionally, catalyzes the reversible formation of acyl-phosphate (acyl-PO(4)) from acyl-[acyl-carrier-protein] (acyl-ACP). This enzyme utilizes acyl-ACP as fatty acyl donor, but not acyl-CoA. The protein is Phosphate acyltransferase of Rhodopseudomonas palustris (strain BisA53).